A 393-amino-acid polypeptide reads, in one-letter code: CCA-adding enzyme (393 aa).

Positions 27 and 30 each coordinate ATP. Residues Gly-27 and Arg-30 each contribute to the CTP site. Mg(2+) is bound by residues Asp-40 and Asp-42. Residues Arg-111, Asp-154, Arg-157, Arg-160, and Arg-163 each coordinate ATP. Positions 111, 154, 157, 160, and 163 each coordinate CTP.

It belongs to the tRNA nucleotidyltransferase/poly(A) polymerase family. Bacterial CCA-adding enzyme type 3 subfamily. Homodimer. Mg(2+) is required as a cofactor.

It catalyses the reaction a tRNA precursor + 2 CTP + ATP = a tRNA with a 3' CCA end + 3 diphosphate. It carries out the reaction a tRNA with a 3' CCA end + 2 CTP + ATP = a tRNA with a 3' CCACCA end + 3 diphosphate. Functionally, catalyzes the addition and repair of the essential 3'-terminal CCA sequence in tRNAs without using a nucleic acid template. Adds these three nucleotides in the order of C, C, and A to the tRNA nucleotide-73, using CTP and ATP as substrates and producing inorganic pyrophosphate. tRNA 3'-terminal CCA addition is required both for tRNA processing and repair. Also involved in tRNA surveillance by mediating tandem CCA addition to generate a CCACCA at the 3' terminus of unstable tRNAs. While stable tRNAs receive only 3'-terminal CCA, unstable tRNAs are marked with CCACCA and rapidly degraded. This chain is CCA-adding enzyme, found in Listeria monocytogenes serotype 4b (strain CLIP80459).